Here is a 476-residue protein sequence, read N- to C-terminus: Cardiolipin synthase (476 aa).

2 helical membrane passes run 2-22 (HLFI…IIFI) and 31-51 (WAWI…YILF). PLD phosphodiesterase domains are found at residues 207 to 234 (INYR…GDEY) and 389 to 416 (EKGF…DIRS). Active-site residues include His-212, Lys-214, Asp-219, His-394, Lys-396, and Asp-401.

The protein belongs to the phospholipase D family. Cardiolipin synthase subfamily.

The protein localises to the cell membrane. The enzyme catalyses 2 a 1,2-diacyl-sn-glycero-3-phospho-(1'-sn-glycerol) = a cardiolipin + glycerol. Its function is as follows. Catalyzes the reversible phosphatidyl group transfer from one phosphatidylglycerol molecule to another to form cardiolipin (CL) (diphosphatidylglycerol) and glycerol. The sequence is that of Cardiolipin synthase (cls) from Clostridium perfringens (strain ATCC 13124 / DSM 756 / JCM 1290 / NCIMB 6125 / NCTC 8237 / Type A).